The sequence spans 331 residues: Cathepsin S (331 aa).

An N-terminal signal peptide occupies residues 1-16; the sequence is MKWLVGLLPLCSYAVA. A propeptide spans 17-114 (activation peptide); that stretch reads QVHKDPTLDH…VTYRSNSNQK (98 aa). The N-linked (GlcNAc...) asparagine glycan is linked to asparagine 104. Cystine bridges form between cysteine 126–cysteine 224, cysteine 136–cysteine 180, cysteine 170–cysteine 213, and cysteine 272–cysteine 320. Cysteine 139 is a catalytic residue. Active-site residues include histidine 278 and asparagine 298.

It belongs to the peptidase C1 family.

Its subcellular location is the lysosome. The protein resides in the secreted. It localises to the cytoplasmic vesicle. The protein localises to the phagosome. The catalysed reaction is Similar to cathepsin L, but with much less activity on Z-Phe-Arg-|-NHMec, and more activity on the Z-Val-Val-Arg-|-Xaa compound.. Its function is as follows. Thiol protease. Key protease responsible for the removal of the invariant chain from MHC class II molecules and MHC class II antigen presentation. The bond-specificity of this proteinase is in part similar to the specificities of cathepsin L. This is Cathepsin S (CTSS) from Canis lupus familiaris (Dog).